The primary structure comprises 1368 residues: DNA-directed RNA polymerase subunit beta (1368 aa).

The protein belongs to the RNA polymerase beta chain family. The RNAP catalytic core consists of 2 alpha, 1 beta, 1 beta' and 1 omega subunit. When a sigma factor is associated with the core the holoenzyme is formed, which can initiate transcription.

It catalyses the reaction RNA(n) + a ribonucleoside 5'-triphosphate = RNA(n+1) + diphosphate. In terms of biological role, DNA-dependent RNA polymerase catalyzes the transcription of DNA into RNA using the four ribonucleoside triphosphates as substrates. In Legionella pneumophila subsp. pneumophila (strain Philadelphia 1 / ATCC 33152 / DSM 7513), this protein is DNA-directed RNA polymerase subunit beta.